We begin with the raw amino-acid sequence, 370 residues long: MKKYLKDYEYKILYKRIIFTCWILLIYIFGTHIPAITTVRTYTAISNFYKMTAANVGGDYQALNVFSLGLGPWLTAMIFMTLFYYRDSDRMMKQTRREKSTKERIFTLILALIQAYFVVFTLLSHVKIDHSEKWLIILVLVTGAMILVWLSDLNMRFGIAGPMPIVMISIIRSIMRQNVALSELGPTLLISAALVLIIILLVLIFIEITEYRLPYLDVMDVSSRREHTYLAWKLNPGGSIAIMISFAAFFVLNSAVNLIVQFFNSKNNGVLNFLDFSTPIGITIFLILQLVLSYGISRLILDPKRKAKDFKKNGDFFPGVEPGKPTYHYLIHKARRISWIGAFIVTIIIGIPLYATLLIPQFSKEIYLSV.

The next 9 helical transmembrane spans lie at 17-37, 65-85, 105-125, 134-154, 155-175, 188-208, 240-260, 276-296, and 339-359; these read IIFTCWILLIYIFGTHIPAIT, VFSLGLGPWLTAMIFMTLFYY, IFTLILALIQAYFVVFTLLSH, WLIILVLVTGAMILVWLSDLN, MRFGIAGPMPIVMISIIRSIM, LLISAALVLIIILLVLIFIEI, IAIMISFAAFFVLNSAVNLIV, FSTPIGITIFLILQLVLSYGI, and WIGAFIVTIIIGIPLYATLLI.

Belongs to the SecY/SEC61-alpha family. SecY2 subfamily. As to quaternary structure, component of the accessory SecA2/SecY2 protein translocase complex required to export cell wall proteins. May form heterotrimers with SecE and SecG subunits.

The protein resides in the cell membrane. In terms of biological role, part of the accessory SecA2/SecY2 system specifically required for export of possible cell wall proteins. The central subunit of a protein translocation channel. This is Accessory Sec system protein translocase subunit SecY2 from Staphylococcus carnosus (strain TM300).